We begin with the raw amino-acid sequence, 188 residues long: Elongation factor P-like protein (188 aa).

The protein belongs to the elongation factor P family.

This chain is Elongation factor P-like protein, found in Xanthomonas axonopodis pv. citri (strain 306).